A 240-amino-acid polypeptide reads, in one-letter code: MKNKLITFKNNNFTALVIYLENINFKYFKKFLLKKIQKSPIFFKNIPIALNIEKLAFNFNWINLKKFFFSIGLFLIGIFGCKKESVKLDILKSGLPILFKKKKTLLNFNKKKNFFNKNSNKNHYSSLFIKNQKSYLVNELIRSGQRIYAPNTDLIITNNVSPGAELIADGNIHIYGNMKGRALAGAHGDETRKIFCTKLSAELISIAGEYCTVDQIPIKFLENSVEISLVNKKIFIKYNH.

It belongs to the MinC family. Interacts with MinD and FtsZ.

Its function is as follows. Cell division inhibitor that blocks the formation of polar Z ring septums. Rapidly oscillates between the poles of the cell to destabilize FtsZ filaments that have formed before they mature into polar Z rings. Prevents FtsZ polymerization. In Buchnera aphidicola subsp. Cinara cedri (strain Cc), this protein is Probable septum site-determining protein MinC.